A 152-amino-acid chain; its full sequence is Xanthine-guanine phosphoribosyltransferase (152 aa).

Residues 37–38 (RG), R69, and 88–96 (DDLVDTGGT) each bind 5-phospho-alpha-D-ribose 1-diphosphate. A GMP-binding site is contributed by R69. Mg(2+) is bound at residue D89. 2 residues coordinate guanine: D92 and I135. Xanthine contacts are provided by D92 and I135. GMP-binding positions include 92–96 (DTGGT) and 134–135 (WI).

It belongs to the purine/pyrimidine phosphoribosyltransferase family. XGPT subfamily. In terms of assembly, homotetramer. The cofactor is Mg(2+).

It is found in the cell inner membrane. The enzyme catalyses GMP + diphosphate = guanine + 5-phospho-alpha-D-ribose 1-diphosphate. It catalyses the reaction XMP + diphosphate = xanthine + 5-phospho-alpha-D-ribose 1-diphosphate. It carries out the reaction IMP + diphosphate = hypoxanthine + 5-phospho-alpha-D-ribose 1-diphosphate. It participates in purine metabolism; GMP biosynthesis via salvage pathway; GMP from guanine: step 1/1. It functions in the pathway purine metabolism; XMP biosynthesis via salvage pathway; XMP from xanthine: step 1/1. Its function is as follows. Purine salvage pathway enzyme that catalyzes the transfer of the ribosyl-5-phosphate group from 5-phospho-alpha-D-ribose 1-diphosphate (PRPP) to the N9 position of the 6-oxopurines guanine and xanthine to form the corresponding ribonucleotides GMP (guanosine 5'-monophosphate) and XMP (xanthosine 5'-monophosphate), with the release of PPi. To a lesser extent, also acts on hypoxanthine. The sequence is that of Xanthine-guanine phosphoribosyltransferase from Klebsiella pneumoniae (strain 342).